The sequence spans 359 residues: Cytoplasmic tRNA 2-thiolation protein 2 (359 aa).

Belongs to the CTU2/NCS2 family.

It is found in the cytoplasm. It participates in tRNA modification; 5-methoxycarbonylmethyl-2-thiouridine-tRNA biosynthesis. Plays a central role in 2-thiolation of mcm(5)S(2)U at tRNA wobble positions of tRNA(Lys), tRNA(Glu) and tRNA(Gln). May act by forming a heterodimer with NCS6 that ligates sulfur from thiocarboxylated URM1 onto the uridine of tRNAs at wobble position. Prior mcm(5) tRNA modification by the elongator complex is required for 2-thiolation. May also be involved in protein urmylation. The sequence is that of Cytoplasmic tRNA 2-thiolation protein 2 from Ajellomyces capsulatus (strain NAm1 / WU24) (Darling's disease fungus).